Here is a 337-residue protein sequence, read N- to C-terminus: Phospholipase A1 1 (337 aa).

A signal peptide spans 1-21 (MNFKYSILFICFVKVLDNCYA). A propeptide spanning residues 22–35 (ADDLTTLRNGTLDR) is cleaved from the precursor. An intrachain disulfide couples cysteine 41 to cysteine 124. The active-site Nucleophile is the serine 174. Aspartate 202 functions as the Charge relay system in the catalytic mechanism. Intrachain disulfides connect cysteine 213-cysteine 218 and cysteine 256-cysteine 261. Histidine 263 acts as the Charge relay system in catalysis. 3 disulfides stabilise this stretch: cysteine 278-cysteine 305, cysteine 279-cysteine 330, and cysteine 298-cysteine 303.

This sequence belongs to the AB hydrolase superfamily. Lipase family. As to expression, expressed by the venom gland.

It is found in the secreted. The enzyme catalyses a 1,2-diacyl-sn-glycero-3-phosphocholine + H2O = a 2-acyl-sn-glycero-3-phosphocholine + a fatty acid + H(+). Its function is as follows. Catalyzes the hydrolysis of phosphatidylcholine with phospholipase A1 activity. May act as an allergen and induce hemolytic activity. The chain is Phospholipase A1 1 from Polistes dominula (European paper wasp).